We begin with the raw amino-acid sequence, 209 residues long: ATP synthase subunit delta (209 aa).

The protein belongs to the ATPase delta chain family. F-type ATPases have 2 components, F(1) - the catalytic core - and F(0) - the membrane proton channel. F(1) has five subunits: alpha(3), beta(3), gamma(1), delta(1), epsilon(1). F(0) has three main subunits: a(1), b(2) and c(10-14). The alpha and beta chains form an alternating ring which encloses part of the gamma chain. F(1) is attached to F(0) by a central stalk formed by the gamma and epsilon chains, while a peripheral stalk is formed by the delta and b chains.

It is found in the cell inner membrane. F(1)F(0) ATP synthase produces ATP from ADP in the presence of a proton or sodium gradient. F-type ATPases consist of two structural domains, F(1) containing the extramembraneous catalytic core and F(0) containing the membrane proton channel, linked together by a central stalk and a peripheral stalk. During catalysis, ATP synthesis in the catalytic domain of F(1) is coupled via a rotary mechanism of the central stalk subunits to proton translocation. Its function is as follows. This protein is part of the stalk that links CF(0) to CF(1). It either transmits conformational changes from CF(0) to CF(1) or is implicated in proton conduction. This chain is ATP synthase subunit delta, found in Psychrobacter sp. (strain PRwf-1).